We begin with the raw amino-acid sequence, 149 residues long: Large ribosomal subunit protein uL22c (149 aa).

This sequence belongs to the universal ribosomal protein uL22 family. As to quaternary structure, part of the 50S ribosomal subunit.

It localises to the plastid. The protein resides in the chloroplast. Its function is as follows. This protein binds specifically to 23S rRNA. The globular domain of the protein is located near the polypeptide exit tunnel on the outside of the subunit, while an extended beta-hairpin is found that lines the wall of the exit tunnel in the center of the 70S ribosome. This chain is Large ribosomal subunit protein uL22c (rpl22-A), found in Pelargonium hortorum (Common geranium).